A 97-amino-acid polypeptide reads, in one-letter code: Co-chaperonin GroES (97 aa).

Belongs to the GroES chaperonin family. Heptamer of 7 subunits arranged in a ring. Interacts with the chaperonin GroEL.

The protein localises to the cytoplasm. In terms of biological role, together with the chaperonin GroEL, plays an essential role in assisting protein folding. The GroEL-GroES system forms a nano-cage that allows encapsulation of the non-native substrate proteins and provides a physical environment optimized to promote and accelerate protein folding. GroES binds to the apical surface of the GroEL ring, thereby capping the opening of the GroEL channel. The polypeptide is Co-chaperonin GroES (Enterobacter sp. (strain 638)).